A 160-amino-acid polypeptide reads, in one-letter code: Small ribosomal subunit protein bS6 (160 aa).

It belongs to the bacterial ribosomal protein bS6 family.

Functionally, binds together with bS18 to 16S ribosomal RNA. The chain is Small ribosomal subunit protein bS6 from Ureaplasma urealyticum serovar 10 (strain ATCC 33699 / Western).